A 309-amino-acid chain; its full sequence is DNA-directed RNA polymerase subunit alpha (309 aa).

An alpha N-terminal domain (alpha-NTD) region spans residues Met-1–Asp-225. Residues Ile-237 to Asn-309 are alpha C-terminal domain (alpha-CTD).

This sequence belongs to the RNA polymerase alpha chain family. In terms of assembly, in plastids the minimal PEP RNA polymerase catalytic core is composed of four subunits: alpha, beta, beta', and beta''. When a (nuclear-encoded) sigma factor is associated with the core the holoenzyme is formed, which can initiate transcription.

The protein resides in the plastid. It localises to the chloroplast. The enzyme catalyses RNA(n) + a ribonucleoside 5'-triphosphate = RNA(n+1) + diphosphate. In terms of biological role, DNA-dependent RNA polymerase catalyzes the transcription of DNA into RNA using the four ribonucleoside triphosphates as substrates. The chain is DNA-directed RNA polymerase subunit alpha from Emiliania huxleyi (Coccolithophore).